A 174-amino-acid polypeptide reads, in one-letter code: Cytochrome c-type biogenesis protein CcmE (174 aa).

Topologically, residues 1-8 (MNPRRKSR) are cytoplasmic. Residues 9 to 29 (LSVVLFIFLGISVASALVLYA) traverse the membrane as a helical; Signal-anchor for type II membrane protein segment. Over 30-174 (LRQNIDLFYT…QEKQFKEGNQ (145 aa)) the chain is Periplasmic. Positions 131 and 135 each coordinate heme. The disordered stretch occupies residues 149 to 174 (KPMGISDLKNESDRDRQEKQFKEGNQ). A compositionally biased stretch (basic and acidic residues) spans 156–174 (LKNESDRDRQEKQFKEGNQ).

The protein belongs to the CcmE/CycJ family.

Its subcellular location is the cell inner membrane. Its function is as follows. Heme chaperone required for the biogenesis of c-type cytochromes. Transiently binds heme delivered by CcmC and transfers the heme to apo-cytochromes in a process facilitated by CcmF and CcmH. The polypeptide is Cytochrome c-type biogenesis protein CcmE (Histophilus somni (strain 129Pt) (Haemophilus somnus)).